We begin with the raw amino-acid sequence, 367 residues long: 7,8-didemethyl-8-hydroxy-5-deazariboflavin synthase (367 aa).

The region spanning 39 to 275 is the Radical SAM core domain; sequence LTFARNVFVP…AEVGVQVPPN (237 aa). 3 residues coordinate [4Fe-4S] cluster: Cys53, Cys57, and Cys60.

This sequence belongs to the radical SAM superfamily. CofG family. As to quaternary structure, consists of two subunits, CofG and CofH. Requires [4Fe-4S] cluster as cofactor.

It catalyses the reaction 5-amino-5-(4-hydroxybenzyl)-6-(D-ribitylimino)-5,6-dihydrouracil + S-adenosyl-L-methionine = 7,8-didemethyl-8-hydroxy-5-deazariboflavin + 5'-deoxyadenosine + L-methionine + NH4(+) + H(+). The protein operates within cofactor biosynthesis; coenzyme F0 biosynthesis. Catalyzes the radical-mediated synthesis of 7,8-didemethyl-8-hydroxy-5-deazariboflavin from 5-amino-5-(4-hydroxybenzyl)-6-(D-ribitylimino)-5,6-dihydrouracil. The polypeptide is 7,8-didemethyl-8-hydroxy-5-deazariboflavin synthase (Halobacterium salinarum (strain ATCC 29341 / DSM 671 / R1)).